The primary structure comprises 92 residues: MARSLKKNPFVANHLLGKIEKLNMREEKEIIVTWSRASTIIPTMIGHTIAIHNGKEHLPIYITDRMVGHKLGEFAPTLTFRGHARNDNRSRR.

Belongs to the universal ribosomal protein uS19 family.

Its subcellular location is the plastid. The protein localises to the chloroplast. In terms of biological role, protein S19 forms a complex with S13 that binds strongly to the 16S ribosomal RNA. The polypeptide is Small ribosomal subunit protein uS19c (Illicium oligandrum (Star anise)).